A 1328-amino-acid polypeptide reads, in one-letter code: Protein turtle homolog B (1328 aa).

Positions 1 to 20 are cleaved as a signal peptide; the sequence is MIWYVATLIASVISTRGLVA. At 21–722 the chain is on the extracellular side; the sequence is QVAHGLREEP…DLTDDGLARP (702 aa). 5 Ig-like domains span residues 30 to 115, 139 to 226, 228 to 320, 324 to 415, and 420 to 504; these read PEFV…ECKV, PTFT…LLVQ, PPFI…AYLT, PARV…ARLV, and PYFT…THLT. 2 disulfides stabilise this stretch: Cys-45-Cys-113 and Cys-161-Cys-208. N-linked (GlcNAc...) asparagine glycosylation is found at Asn-241 and Asn-258. 3 cysteine pairs are disulfide-bonded: Cys-250-Cys-303, Cys-346-Cys-397, and Cys-442-Cys-488. Fibronectin type-III domains lie at 512-604 and 614-708; these read APGS…TLAF and LVTP…STDI. Asn-624 is a glycosylation site (N-linked (GlcNAc...) asparagine). A helical transmembrane segment spans residues 723–743; it reads VLAGIVATICFLAAAILFSTL. The Cytoplasmic portion of the chain corresponds to 744 to 1328; the sequence is AACFVNKQRK…EPPTTLPTSG (585 aa). Disordered regions lie at residues 758 to 817, 914 to 1040, and 1107 to 1328; these read RKKD…EKEL, PMSS…PEPW, and SPGR…PTSG. Phosphoserine is present on residues Ser-775, Ser-783, and Ser-794. Low complexity predominate over residues 990–1001; it reads SPLSSVMSSPPL. Polar residues-rich tracts occupy residues 1018–1033, 1129–1141, and 1199–1214; these read ENAS…TPTG, LVSQ…TSQG, and SRLS…SRTG. Arg-1136 is subject to Omega-N-methylarginine. Residues Ser-1207 and Ser-1215 each carry the phosphoserine modification. Low complexity predominate over residues 1246-1273; sequence SFSRKSTPSSTGSPSQSSRSGSPSYRPT. Composition is skewed to pro residues over residues 1284-1295 and 1318-1328; these read PSPPPGPAPPAP and PEPPTTLPTSG.

Belongs to the immunoglobulin superfamily. Turtle family. In terms of assembly, found in a complex with MAGI2 and NLGN2, where it interacts with MAGI2 (via PDZ 5 and PDZ 6 domains). Post-translationally, N-glycosylated and sialylated. Not significantly O-glycosylated. As to expression, detected primarily in brain, including cortex, hippocampus, cerebellum and striatum. Largely restricted to inhibitory GABAergic interneurons (at protein level).

It localises to the postsynaptic cell membrane. The protein localises to the postsynaptic density. In terms of biological role, transmembrane protein which is abundantly expressed in interneurons, where it may regulate inhibitory synapse development. May mediate homophilic cell adhesion. This Rattus norvegicus (Rat) protein is Protein turtle homolog B.